The sequence spans 285 residues: 4-hydroxybenzoate octaprenyltransferase (285 aa).

The next 9 helical transmembrane spans lie at 19-39 (IGSL…ADGL), 42-62 (WHVL…GCVI), 82-102 (LPSG…LVVC), 104-124 (FLLV…GIVL), 136-156 (YLPQ…AYAA), 166-186 (WLLF…YAMV), 210-230 (IIGL…SQLA), 233-253 (GIYY…QWLI), and 265-285 (FLNN…SVLI).

The protein belongs to the UbiA prenyltransferase family. It depends on Mg(2+) as a cofactor.

The protein resides in the cell inner membrane. It catalyses the reaction all-trans-octaprenyl diphosphate + 4-hydroxybenzoate = 4-hydroxy-3-(all-trans-octaprenyl)benzoate + diphosphate. It participates in cofactor biosynthesis; ubiquinone biosynthesis. In terms of biological role, catalyzes the prenylation of para-hydroxybenzoate (PHB) with an all-trans polyprenyl group. Mediates the second step in the final reaction sequence of ubiquinone-8 (UQ-8) biosynthesis, which is the condensation of the polyisoprenoid side chain with PHB, generating the first membrane-bound Q intermediate 3-octaprenyl-4-hydroxybenzoate. The sequence is that of 4-hydroxybenzoate octaprenyltransferase from Aliivibrio fischeri (strain ATCC 700601 / ES114) (Vibrio fischeri).